Reading from the N-terminus, the 455-residue chain is tRNA modification GTPase MnmE (455 aa).

Residues Arg-24, Glu-81, and Lys-120 each contribute to the (6S)-5-formyl-5,6,7,8-tetrahydrofolate site. The region spanning Gly-216 to Gly-378 is the TrmE-type G domain. Asn-226 is a binding site for K(+). Residues Asn-226–Ser-231, Thr-245–Thr-251, Asp-270–Gly-273, Asn-335–Asp-338, and Ser-359–Arg-361 each bind GTP. Ser-230 provides a ligand contact to Mg(2+). K(+)-binding residues include Thr-245, Ile-247, and Thr-250. Position 251 (Thr-251) interacts with Mg(2+). (6S)-5-formyl-5,6,7,8-tetrahydrofolate is bound at residue Lys-455.

Belongs to the TRAFAC class TrmE-Era-EngA-EngB-Septin-like GTPase superfamily. TrmE GTPase family. Homodimer. Heterotetramer of two MnmE and two MnmG subunits. K(+) is required as a cofactor.

The protein resides in the cytoplasm. Functionally, exhibits a very high intrinsic GTPase hydrolysis rate. Involved in the addition of a carboxymethylaminomethyl (cmnm) group at the wobble position (U34) of certain tRNAs, forming tRNA-cmnm(5)s(2)U34. This is tRNA modification GTPase MnmE from Pseudomonas paraeruginosa (strain DSM 24068 / PA7) (Pseudomonas aeruginosa (strain PA7)).